Reading from the N-terminus, the 467-residue chain is H(+)/Cl(-) exchange transporter ClcA (467 aa).

At 1–30 the chain is on the cytoplasmic side; it reads MKSQTIPTRRVRGFRRAAVIRQLLSRDKTP. A helical membrane pass occupies residues 31 to 67; that stretch reads LTILLLASLTGVLAGLAGVAFEKAVAWVTAHRIEGLA. The Periplasmic segment spans residues 68 to 74; that stretch reads QVAHIPW. Residues 75–98 traverse the membrane as a helical segment; that stretch reads LVWLLAFLFSALLAMVGYFLVRRF. Topologically, residues 99–106 are cytoplasmic; the sequence is APEAGGSG. Positions 104-108 match the Selectivity filter part_1 motif; it reads GSGIP. Serine 105 lines the chloride pocket. The helical intramembrane region spans 107–114; sequence IPEIEGAL. Residues 115–121 lie on the Cytoplasmic side of the membrane; it reads EELRPVR. A helical transmembrane segment spans residues 122–139; it reads WWRVLPVKFFGGMGTLGA. Over 140-145 the chain is Periplasmic; sequence GMVLGR. The Selectivity filter part_2 motif lies at 144–148; sequence GREGP. A helical membrane pass occupies residues 146 to 164; sequence EGPMVQMGGNIGRMVLDIF. The Cytoplasmic segment spans residues 165 to 174; the sequence is HRPDAEARHT. 2 consecutive intramembrane regions (helical) follow at residues 175 to 187 and 191 to 199; these read LLATGAAAGLAAA and PLAGILFII. The Cytoplasmic segment spans residues 200–212; that stretch reads EEMRTQFHYNLIS. A helical membrane pass occupies residues 213-230; the sequence is IKAVFTGVIMSTIVFRIF. At 231-250 the chain is on the periplasmic side; sequence NGEKSVIEVGQLTDAPVYTL. The chain crosses the membrane as a helical span at residues 251 to 279; that stretch reads WLYLLLGIIFGAVGPLFNRLVLGMQDVFA. The Cytoplasmic portion of the chain corresponds to 280–285; it reads RIHGGN. Residues 286-307 traverse the membrane as a helical segment; it reads TTRWVLLGGAIGGACGLLALWE. The Periplasmic portion of the chain corresponds to 308–327; it reads PAAAGGGFGLIPIAAAGNFT. Residues 328 to 347 traverse the membrane as a helical segment; the sequence is VGMLLFIFIARVVTTVFCFS. The Cytoplasmic portion of the chain corresponds to 348-352; the sequence is SGAPG. Positions 353–357 match the Selectivity filter part_3 motif; it reads GIFAP. A helical membrane pass occupies residues 353–374; it reads GIFAPMLALGTLLGSAFGMACA. 2 residues coordinate chloride: isoleucine 354 and phenylalanine 355. Residues 375–384 are Periplasmic-facing; the sequence is AWFPQWHLQA. Residues 385-399 constitute an intramembrane region (helical); sequence GTFAIAGMGALLAAS. Residues 400-402 constitute an intramembrane region (note=Loop between two helices); sequence VRA. An intramembrane region (helical) is located at residues 403–414; sequence PITGIVLVLEMT. Residues 415 to 419 constitute an intramembrane region (note=Loop between two helices); the sequence is DNYQL. The chain crosses the membrane as a helical span at residues 420-436; that stretch reads ILPMIITCLGATLLAQF. The Cytoplasmic segment spans residues 437–467; it reads LGGKPLYSTILARTLAKQEAERQAQADGRNT. Tyrosine 443 contacts chloride.

Belongs to the chloride channel (TC 2.A.49) family. ClcA subfamily. In terms of assembly, homodimer.

The protein resides in the cell inner membrane. It catalyses the reaction 2 chloride(in) + H(+)(out) = 2 chloride(out) + H(+)(in). Functionally, proton-coupled chloride transporter. Functions as antiport system and exchanges two chloride ions for 1 proton. Probably acts as an electrical shunt for an outwardly-directed proton pump that is linked to amino acid decarboxylation, as part of the extreme acid resistance (XAR) response. This chain is H(+)/Cl(-) exchange transporter ClcA, found in Cronobacter sakazakii (strain ATCC BAA-894) (Enterobacter sakazakii).